A 356-amino-acid chain; its full sequence is Protein-arginine kinase (356 aa).

The region spanning 24–254 (IVLSTRIRLA…HQLIQQEKAA (231 aa)) is the Phosphagen kinase C-terminal domain. Residues 27-31 (STRIR), His92, Arg125, 176-180 (RASVM), and 207-212 (RGIYGE) contribute to the ATP site. The short motif at 337–342 (RDYRRA) is the RDXXRA motif of the pArg binding pocket involved in allosteric regulation element.

It belongs to the ATP:guanido phosphotransferase family.

The catalysed reaction is L-arginyl-[protein] + ATP = N(omega)-phospho-L-arginyl-[protein] + ADP + H(+). With respect to regulation, appears to be allosterically activated by the binding of pArg-containing polypeptides to the pArg-binding pocket localized in the C-terminal domain of McsB. Functionally, catalyzes the specific phosphorylation of arginine residues in a large number of proteins. Is part of the bacterial stress response system. Protein arginine phosphorylation has a physiologically important role and is involved in the regulation of many critical cellular processes, such as protein homeostasis, motility, competence, and stringent and stress responses, by regulating gene expression and protein activity. This is Protein-arginine kinase from Bacillus cytotoxicus (strain DSM 22905 / CIP 110041 / 391-98 / NVH 391-98).